Here is a 493-residue protein sequence, read N- to C-terminus: Cytochrome P450 monooxygenase astA (493 aa).

The chain crosses the membrane as a helical span at residues 5 to 25; it reads EIILLGLAALAVTYQVIVWIY. 2 N-linked (GlcNAc...) asparagine glycosylation sites follow: asparagine 174 and asparagine 286. Cysteine 433 is a binding site for heme.

Belongs to the cytochrome P450 family. Heme is required as a cofactor.

Its subcellular location is the membrane. It carries out the reaction asperterpenoid A + reduced [NADPH--hemoprotein reductase] + O2 = asperterpenoid C + oxidized [NADPH--hemoprotein reductase] + H2O + H(+). Its pathway is secondary metabolite biosynthesis; terpenoid biosynthesis. Functionally, cytochrome P450 monooxygenase; part of the gene cluster that mediates the biosynthesis of the asperterpenoids, sesterterpenes that exhibit anti-tuberculosis activity. The first step of the pathway is performed by the sesterterpene synthase astC that possesses both prenyl transferase and terpene cyclase activity, converting isopentenyl diphosphate and dimethylallyl diphosphate into geranylfarnesyl diphosphate (GFPP) and further converting GFPP into preasperterpenoid A, respectively. The cytochrome P450 monooxygenase astB then dually oxidizes preasperterpenoid A to produce asperterpenoid A along with a minor product, asperterpenoid B. Finally, the cytochrome P450 monooxygenase astA converts asperterpenoid A into asperterpenoid C. This Talaromyces wortmannii (Penicillium wortmannii) protein is Cytochrome P450 monooxygenase astA.